Consider the following 305-residue polypeptide: tRNA dimethylallyltransferase (305 aa).

Position 8 to 15 (8 to 15) interacts with ATP; that stretch reads GPTGTGKS. 10–15 lines the substrate pocket; sequence TGTGKS.

This sequence belongs to the IPP transferase family. Monomer. The cofactor is Mg(2+).

It carries out the reaction adenosine(37) in tRNA + dimethylallyl diphosphate = N(6)-dimethylallyladenosine(37) in tRNA + diphosphate. Catalyzes the transfer of a dimethylallyl group onto the adenine at position 37 in tRNAs that read codons beginning with uridine, leading to the formation of N6-(dimethylallyl)adenosine (i(6)A). This is tRNA dimethylallyltransferase from Mycobacterium sp. (strain JLS).